Consider the following 637-residue polypeptide: Biosynthetic arginine decarboxylase (637 aa).

Residue lysine 101 is modified to N6-(pyridoxal phosphate)lysine. 286–296 is a substrate binding site; sequence FDVGGGLAVDY.

It belongs to the Orn/Lys/Arg decarboxylase class-II family. SpeA subfamily. Mg(2+) is required as a cofactor. Pyridoxal 5'-phosphate serves as cofactor.

The enzyme catalyses L-arginine + H(+) = agmatine + CO2. Its pathway is amine and polyamine biosynthesis; agmatine biosynthesis; agmatine from L-arginine: step 1/1. Functionally, catalyzes the biosynthesis of agmatine from arginine. The sequence is that of Biosynthetic arginine decarboxylase from Shewanella halifaxensis (strain HAW-EB4).